Here is a 109-residue protein sequence, read N- to C-terminus: Juvenile hormone esterase, isoform A (109 aa).

Belongs to the type-B carboxylesterase/lipase family. In terms of tissue distribution, fat body, the site of their biosynthesis, and the hemolymph where it is secreted.

The catalysed reaction is juvenile hormone I + H2O = juvenile hormone I carboxylate + methanol + H(+). The enzyme catalyses juvenile hormone III + H2O = juvenile hormone III carboxylate + methanol + H(+). Functionally, JH esterase plays a crucial role in the decrease of JH activity in lepidopteran insects, by hydrolyzing the methyl ester of JH. It is also involved in the transport of JH. The sequence is that of Juvenile hormone esterase, isoform A from Trichoplusia ni (Cabbage looper).